Consider the following 1108-residue polypeptide: Serine/threonine-protein kinase AKL1 (1108 aa).

Residue Ser-2 is modified to N-acetylserine. A Phosphoserine modification is found at Ser-10. The 285-residue stretch at 35–319 folds into the Protein kinase domain; sequence VEVVNYLAEG…IYQVLYHLCE (285 aa). Residues 41 to 49 and Lys-70 each bind ATP; that span reads LAEGGFAQI. Asp-181 functions as the Proton acceptor in the catalytic mechanism. The interval 405–466 is disordered; it reads IPSQNVGQEL…QSPGIEDKSI (62 aa). Position 407 is a phosphoserine (Ser-407). Basic and acidic residues predominate over residues 419-435; sequence ESQSDQRKSTLSEDKSS. Residues 436-449 are compositionally biased toward low complexity; it reads RTTSNANSSGTANN. Phosphothreonine is present on Thr-471. Residues 493-513 are compositionally biased toward polar residues; that stretch reads KQSSDPTISEQSPRLNTQSLP. The interval 493–534 is disordered; the sequence is KQSSDPTISEQSPRLNTQSLPQRQKSTSSYSSGGRSMKSTSY. Ser-504 is subject to Phosphoserine. Over residues 514–534 the composition is skewed to low complexity; that stretch reads QRQKSTSSYSSGGRSMKSTSY. 2 positions are modified to phosphoserine: Ser-541 and Ser-574. The span at 590 to 629 shows a compositional bias: low complexity; sequence QQQGQRYQQAQNQTGTQGNTFPDESQYQSRVEQQQQQQDQ. Disordered stretches follow at residues 590–663 and 765–791; these read QQQG…GDSG and EDMRNAQGGEPPILAGNSANEPMHSSS. Residues 781–791 are compositionally biased toward polar residues; sequence NSANEPMHSSS. At Ser-801 the chain carries Phosphoserine. The tract at residues 807-838 is disordered; it reads AGKQSFQDTNEPQTGGIEDAGGSGTIKGSNNN. Over residues 810-819 the composition is skewed to polar residues; the sequence is QSFQDTNEPQ. A Phosphoserine modification is found at Ser-846. Positions 858–1108 are disordered; sequence GAAVSSFSSS…SFFSVFRSEK (251 aa). The segment covering 859 to 872 has biased composition (low complexity); sequence AAVSSFSSSSSSAS. The segment covering 910-934 has biased composition (basic and acidic residues); that stretch reads DDARRGKTAERRPLHNERGHKDQAR. Residues 935-976 show a composition bias toward polar residues; that stretch reads SSDASKSNQFKSKDFSSVSTRQPRQSLDLNFQEVNLSSPTLT. Ser-953 and Ser-960 each carry phosphoserine. The span at 1006–1048 shows a compositional bias: basic and acidic residues; the sequence is ENKRHSTGHELSTRSNGKHETHRTGSKQRHDLERYRHSKDKDS. Residues Lys-1008 and Lys-1046 each participate in a glycyl lysine isopeptide (Lys-Gly) (interchain with G-Cter in ubiquitin) cross-link. Phosphoserine is present on Ser-1048. Positions 1049 to 1060 are enriched in low complexity; it reads NSSITISTSTPS. Over residues 1071 to 1082 the composition is skewed to basic and acidic residues; that stretch reads QSLDLERVRREA. Residue Ser-1072 is modified to Phosphoserine.

Belongs to the protein kinase superfamily. Ser/Thr protein kinase family.

It catalyses the reaction L-seryl-[protein] + ATP = O-phospho-L-seryl-[protein] + ADP + H(+). The enzyme catalyses L-threonyl-[protein] + ATP = O-phospho-L-threonyl-[protein] + ADP + H(+). In terms of biological role, phosphorylates SCD5. The sequence is that of Serine/threonine-protein kinase AKL1 (AKL1) from Saccharomyces cerevisiae (strain ATCC 204508 / S288c) (Baker's yeast).